A 146-amino-acid chain; its full sequence is uncharacterized protein (146 aa).

Belongs to the BlaI transcriptional regulatory family.

This is an uncharacterized protein from Latilactobacillus sakei (Lactobacillus sakei).